A 476-amino-acid polypeptide reads, in one-letter code: Growth/differentiation factor 10 (476 aa).

An N-terminal signal peptide occupies residues 1–29; it reads MAPGPARISLGSQLLPMVPLLLLLRGAGC. A propeptide spanning residues 30–366 is cleaved from the precursor; sequence GHRGPSWSSL…EKTMQKARRR (337 aa). A disordered region spans residues 39-63; it reads LPSAAAGLQGDRDSQQSPGDAAAAL. 3 N-linked (GlcNAc...) asparagine glycosylation sites follow: N114, N152, and N277. The segment at 268–301 is disordered; that stretch reads GDFEPGAAPNSSADPRVRRAAQVSKPLQDNELPG. Disulfide bonds link C374/C441, C403/C473, and C407/C475. N-linked (GlcNAc...) asparagine glycosylation is present at N467.

The protein belongs to the TGF-beta family. As to quaternary structure, homodimer or heterodimer. Can form a non-covalent complex of the mature region and the pro-region. In terms of tissue distribution, highly expressed in epididymal adipose tissue, brain, bone and aorta and to a lesser extent in liver and spleen. Expressed at higher levels in preadipocytes than in mature adipocytes. Strongly expressed in glial cells of the cerebellum.

It is found in the secreted. Growth factor involved in osteogenesis and adipogenesis. Plays an inhibitory role in the process of osteoblast differentiation via SMAD2/3 pathway. Plays an inhibitory role in the process of adipogenesis. This chain is Growth/differentiation factor 10, found in Mus musculus (Mouse).